A 293-amino-acid chain; its full sequence is Small ribosomal subunit protein uS5 (293 aa).

Residues 1-55 (MADDAGAAGGPGGPGGPGLGGRGGFRGGFGSGLRGRGRGRGRGRGRGRGARGGKA) are disordered. Ala2 is subject to N-acetylalanine. The span at 7 to 34 (AAGGPGGPGGPGLGGRGGFRGGFGSGLR) shows a compositional bias: gly residues. Tandem repeats lie at residues 9–11 (GGP), 12–14 (GGP), 15–17 (GGP), 22–25 (RGGF), 26–29 (RGGF), 34–35 (RG), 36–37 (RG), 38–39 (RG), 40–41 (RG), 42–43 (RG), 44–45 (RG), 46–47 (RG), 48–49 (RG), and 51–52 (RG). A 3 X 3 AA tandem repeats of G-G-P region spans residues 9–17 (GGPGGPGGP). Positions 22-29 (RGGFRGGF) are 2 X 4 AA tandem repeats of R-G-G-F. Residues 34–52 (RGRGRGRGRGRGRGRGARG) are 9 X 2 AA tandem repeats of R-G. Over residues 35 to 51 (GRGRGRGRGRGRGRGAR) the composition is skewed to basic residues. Residues Lys54 and Lys58 each participate in a glycyl lysine isopeptide (Lys-Gly) (interchain with G-Cter in ubiquitin) cross-link. Residues 102 to 165 (LKDEVLKIMP…ILAKLSIVPV (64 aa)) form the S5 DRBM domain. Position 252 is a phosphothreonine (Thr252). An N6-acetyllysine modification is found at Lys263. Residue Ser264 is modified to Phosphoserine. Thr270 is subject to Phosphothreonine. Residue Lys275 is modified to N6-acetyllysine; alternate. Residue Lys275 forms a Glycyl lysine isopeptide (Lys-Gly) (interchain with G-Cter in SUMO1); alternate linkage. A Glycyl lysine isopeptide (Lys-Gly) (interchain with G-Cter in SUMO2); alternate cross-link involves residue Lys275. Residue Lys275 forms a Glycyl lysine isopeptide (Lys-Gly) (interchain with G-Cter in ubiquitin); alternate linkage. Ser281 carries the post-translational modification Phosphoserine.

It belongs to the universal ribosomal protein uS5 family. As to quaternary structure, component of the small ribosomal subunit. Interacts with zinc finger protein ZNF277 (via zinc-finger domains); the interaction is direct; the interaction is extra-ribosomal. Interaction with ZNF277 competes with the binding of RPS2 to protein arginine methyltransferase PRMT3. Post-translationally, citrullinated by PADI4 in the Arg/Gly-rich region. Asymmetric arginine dimethylation by PRMT3 occurs at multiple sites in the Arg/Gly-rich region. In terms of processing, monoubiquitinated at Lys-54 and Lys-58 by RNF10 when a ribosome has stalled during translation, leading to its degradation by the proteasome. Deubiquitinated at Lys-54 and Lys-58 by USP10, preventing degradation by the proteasome and promoting 40S ribosome subunit recycling following ribosome dissociation.

The protein resides in the cytoplasm. The protein localises to the nucleus. It is found in the nucleolus. Component of the ribosome, a large ribonucleoprotein complex responsible for the synthesis of proteins in the cell. The small ribosomal subunit (SSU) binds messenger RNAs (mRNAs) and translates the encoded message by selecting cognate aminoacyl-transfer RNA (tRNA) molecules. The large subunit (LSU) contains the ribosomal catalytic site termed the peptidyl transferase center (PTC), which catalyzes the formation of peptide bonds, thereby polymerizing the amino acids delivered by tRNAs into a polypeptide chain. The nascent polypeptides leave the ribosome through a tunnel in the LSU and interact with protein factors that function in enzymatic processing, targeting, and the membrane insertion of nascent chains at the exit of the ribosomal tunnel. Plays a role in the assembly and function of the 40S ribosomal subunit. Mutations in this protein affects the control of translational fidelity. Involved in nucleolar processing of pre-18S ribosomal RNA and ribosome assembly. The sequence is that of Small ribosomal subunit protein uS5 (Rps2) from Rattus norvegicus (Rat).